The chain runs to 153 residues: Large ribosomal subunit protein uL30 (153 aa).

The protein belongs to the universal ribosomal protein uL30 family. As to quaternary structure, part of the 50S ribosomal subunit.

The sequence is that of Large ribosomal subunit protein uL30 from Methanosarcina acetivorans (strain ATCC 35395 / DSM 2834 / JCM 12185 / C2A).